We begin with the raw amino-acid sequence, 301 residues long: GTPase Era (301 aa).

The Era-type G domain occupies lysine 7 to glutamate 173. Residues glycine 15 to serine 22 are G1. A GTP-binding site is contributed by glycine 15 to serine 22. The interval glutamine 41–asparagine 45 is G2. Positions aspartate 62–glycine 65 are G3. Residues aspartate 62–isoleucine 66 and asparagine 123–aspartate 126 contribute to the GTP site. A G4 region spans residues asparagine 123–aspartate 126. The segment at isoleucine 152 to alanine 154 is G5. Positions threonine 204–histidine 281 constitute a KH type-2 domain.

Belongs to the TRAFAC class TrmE-Era-EngA-EngB-Septin-like GTPase superfamily. Era GTPase family. As to quaternary structure, monomer.

Its subcellular location is the cytoplasm. It localises to the cell membrane. Its function is as follows. An essential GTPase that binds both GDP and GTP, with rapid nucleotide exchange. Plays a role in 16S rRNA processing and 30S ribosomal subunit biogenesis and possibly also in cell cycle regulation and energy metabolism. This is GTPase Era from Lactobacillus helveticus (strain DPC 4571).